The sequence spans 163 residues: Nucleotide-binding protein Bcer98_0876 (163 aa).

This sequence belongs to the YajQ family.

In terms of biological role, nucleotide-binding protein. This is Nucleotide-binding protein Bcer98_0876 from Bacillus cytotoxicus (strain DSM 22905 / CIP 110041 / 391-98 / NVH 391-98).